We begin with the raw amino-acid sequence, 232 residues long: Ubiquinone biosynthesis O-methyltransferase (232 aa).

Positions 36, 55, 76, and 120 each coordinate S-adenosyl-L-methionine.

It belongs to the methyltransferase superfamily. UbiG/COQ3 family.

It catalyses the reaction a 3-demethylubiquinol + S-adenosyl-L-methionine = a ubiquinol + S-adenosyl-L-homocysteine + H(+). The enzyme catalyses a 3-(all-trans-polyprenyl)benzene-1,2-diol + S-adenosyl-L-methionine = a 2-methoxy-6-(all-trans-polyprenyl)phenol + S-adenosyl-L-homocysteine + H(+). It participates in cofactor biosynthesis; ubiquinone biosynthesis. Functionally, O-methyltransferase that catalyzes the 2 O-methylation steps in the ubiquinone biosynthetic pathway. This Azotobacter vinelandii (strain DJ / ATCC BAA-1303) protein is Ubiquinone biosynthesis O-methyltransferase.